The chain runs to 436 residues: Antilisterial bacteriocin subtilosin biosynthesis protein AlbD (436 aa).

10 consecutive transmembrane segments (helical) span residues Ile27–Ile47, Thr55–Ser75, Leu113–Thr133, Leu134–Leu154, Leu164–Pro184, Thr187–Leu207, Ala240–Met260, Ile270–Ile290, Phe315–Ser335, and Ala395–Val415.

The protein resides in the cell membrane. Its function is as follows. Involved in the production of the bacteriocin subtilosin. Required for immunity to subtilosin. The protein is Antilisterial bacteriocin subtilosin biosynthesis protein AlbD (albD) of Bacillus subtilis (strain 168).